The chain runs to 253 residues: Imidazole glycerol phosphate synthase subunit HisF (253 aa).

Active-site residues include aspartate 11 and aspartate 130.

The protein belongs to the HisA/HisF family. Heterodimer of HisH and HisF.

The protein localises to the cytoplasm. It catalyses the reaction 5-[(5-phospho-1-deoxy-D-ribulos-1-ylimino)methylamino]-1-(5-phospho-beta-D-ribosyl)imidazole-4-carboxamide + L-glutamine = D-erythro-1-(imidazol-4-yl)glycerol 3-phosphate + 5-amino-1-(5-phospho-beta-D-ribosyl)imidazole-4-carboxamide + L-glutamate + H(+). It functions in the pathway amino-acid biosynthesis; L-histidine biosynthesis; L-histidine from 5-phospho-alpha-D-ribose 1-diphosphate: step 5/9. In terms of biological role, IGPS catalyzes the conversion of PRFAR and glutamine to IGP, AICAR and glutamate. The HisF subunit catalyzes the cyclization activity that produces IGP and AICAR from PRFAR using the ammonia provided by the HisH subunit. This Acidithiobacillus ferrooxidans (strain ATCC 23270 / DSM 14882 / CIP 104768 / NCIMB 8455) (Ferrobacillus ferrooxidans (strain ATCC 23270)) protein is Imidazole glycerol phosphate synthase subunit HisF.